Reading from the N-terminus, the 419-residue chain is L-rhamnose isomerase (419 aa).

The Mn(2+) site is built by H262, D294, and D296.

This sequence belongs to the rhamnose isomerase family. As to quaternary structure, homotetramer. The cofactor is Mn(2+).

The protein localises to the cytoplasm. It catalyses the reaction L-rhamnopyranose = L-rhamnulose. Its pathway is carbohydrate degradation; L-rhamnose degradation; glycerone phosphate from L-rhamnose: step 1/3. Its function is as follows. Catalyzes the interconversion of L-rhamnose and L-rhamnulose. This Escherichia coli O45:K1 (strain S88 / ExPEC) protein is L-rhamnose isomerase.